Consider the following 339-residue polypeptide: Pre-mRNA-splicing factor syf2 (339 aa).

The segment at M1–A136 is disordered. Positions R7–E16 are enriched in basic and acidic residues. Positions V17 to T37 are enriched in polar residues. A compositionally biased stretch (low complexity) spans V45–A93. The span at K94 to R103 shows a compositional bias: basic and acidic residues. A compositionally biased stretch (polar residues) spans R126 to T135.

Belongs to the SYF2 family. As to quaternary structure, associated with the spliceosome.

The protein resides in the nucleus. In terms of biological role, involved in pre-mRNA splicing. The protein is Pre-mRNA-splicing factor syf2 (msp-4) of Neurospora crassa (strain ATCC 24698 / 74-OR23-1A / CBS 708.71 / DSM 1257 / FGSC 987).